Consider the following 218-residue polypeptide: uncharacterized protein (218 aa).

Residues 4 to 207 (WKVAAAQYEP…SLLLVGQRSS (204 aa)) form the CN hydrolase domain.

This is an uncharacterized protein from Escherichia coli (strain K12).